We begin with the raw amino-acid sequence, 521 residues long: Cytochrome P450 52A9 (521 aa).

Heme is bound at residue C468.

It belongs to the cytochrome P450 family. The cofactor is heme.

The protein localises to the membrane. Functionally, together with an NADPH cytochrome P450 the enzyme system catalyzes the terminal hydroxylation as the first step in the assimilation of alkanes and fatty acids. The protein is Cytochrome P450 52A9 (CYP52A9) of Candida maltosa (Yeast).